The chain runs to 534 residues: Membrane-bound lytic murein transglycosylase F (534 aa).

Residues 1–24 (MQISQFNRLKRSALLFASVLLLSA) form the signal peptide. The interval 25–285 (CQIESEPKSE…TLEEKYIGHI (261 aa)) is non-LT domain. The tract at residues 287 to 534 (AFDYVDTRAF…AEQTPVPKAE (248 aa)) is LT domain. Glu330 is an active-site residue. The segment at 507–534 (VSGAVEVTPPPEENAPQEAEQTPVPKAE) is disordered. Residues 520–534 (NAPQEAEQTPVPKAE) are compositionally biased toward low complexity.

It in the N-terminal section; belongs to the bacterial solute-binding protein 3 family. This sequence in the C-terminal section; belongs to the transglycosylase Slt family.

The protein localises to the cell outer membrane. The enzyme catalyses Exolytic cleavage of the (1-&gt;4)-beta-glycosidic linkage between N-acetylmuramic acid (MurNAc) and N-acetylglucosamine (GlcNAc) residues in peptidoglycan, from either the reducing or the non-reducing ends of the peptidoglycan chains, with concomitant formation of a 1,6-anhydrobond in the MurNAc residue.. In terms of biological role, murein-degrading enzyme that degrades murein glycan strands and insoluble, high-molecular weight murein sacculi, with the concomitant formation of a 1,6-anhydromuramoyl product. Lytic transglycosylases (LTs) play an integral role in the metabolism of the peptidoglycan (PG) sacculus. Their lytic action creates space within the PG sacculus to allow for its expansion as well as for the insertion of various structures such as secretion systems and flagella. The sequence is that of Membrane-bound lytic murein transglycosylase F from Vibrio campbellii (strain ATCC BAA-1116).